The chain runs to 881 residues: DNA mismatch repair protein MutS (881 aa).

Residue 612–619 (GPNMAGKS) coordinates ATP.

Belongs to the DNA mismatch repair MutS family.

Functionally, this protein is involved in the repair of mismatches in DNA. It is possible that it carries out the mismatch recognition step. This protein has a weak ATPase activity. This chain is DNA mismatch repair protein MutS, found in Clostridium tetani (strain Massachusetts / E88).